The following is a 348-amino-acid chain: MNKILTRSFSTGANFFASGKGKAPVRVAITGASGQIGYQLLFRIASGDMLGKDQPIILQCLELPGAMNSLKGVSMELDDCAFPLLKGIVQSDKPEEAFAGADYALLVGARPRSKGMERGDLLKANAEIFSVQGKALDKSANRDTLRVLVVGNPANTNALIAARNAPNIDPKRFSAMTRLDHNRGLAQLADKTGSAVTDIEKFCIWGNHSATQYPDINFGTVKGKSLVDTINDQKWVKDNFIPTVQQRGAAIIAARGLSSAASAASAAIDHMRDWTYGTNGQWTSMAIYSEGEYGADKGLYFSFPVIVDNKGKYEIVKGLKLDQFSQERFDATRKELLSEMDGVKELLP.

A mitochondrion-targeting transit peptide spans 1-9 (MNKILTRSF). 31–37 (GASGQIG) is an NAD(+) binding site. 2 residues coordinate substrate: Arg112 and Arg118. NAD(+)-binding positions include Asn125, Gln132, and 150 to 152 (VGN). Substrate-binding residues include Asn152 and Arg183. Residue His208 is the Proton acceptor of the active site.

Belongs to the LDH/MDH superfamily. MDH type 2 family. Homodimer.

It is found in the mitochondrion. It catalyses the reaction (S)-malate + NAD(+) = oxaloacetate + NADH + H(+). Its function is as follows. Catalyzes the reversible oxidation of malate to oxaloacetate. The chain is Probable malate dehydrogenase 2, mitochondrial (mdhB) from Dictyostelium discoideum (Social amoeba).